A 269-amino-acid chain; its full sequence is 2-dehydro-3-deoxyphosphooctonate aldolase (269 aa).

The protein belongs to the KdsA family.

The protein localises to the cytoplasm. It catalyses the reaction D-arabinose 5-phosphate + phosphoenolpyruvate + H2O = 3-deoxy-alpha-D-manno-2-octulosonate-8-phosphate + phosphate. The protein operates within carbohydrate biosynthesis; 3-deoxy-D-manno-octulosonate biosynthesis; 3-deoxy-D-manno-octulosonate from D-ribulose 5-phosphate: step 2/3. It functions in the pathway bacterial outer membrane biogenesis; lipopolysaccharide biosynthesis. The chain is 2-dehydro-3-deoxyphosphooctonate aldolase from Chlamydia abortus (strain DSM 27085 / S26/3) (Chlamydophila abortus).